Consider the following 235-residue polypeptide: Ribosomal RNA-processing protein 17 (235 aa).

Residues 49 to 110 adopt a coiled-coil conformation; the sequence is QRQKKAQEFI…AKNDKTEDLQ (62 aa). Over residues 99–108 the composition is skewed to basic and acidic residues; the sequence is EDAKNDKTED. Disordered regions lie at residues 99 to 138 and 209 to 235; these read EDAK…SVKP and RVKK…KRRR. Ser-113, Ser-116, and Ser-122 each carry phosphoserine. The span at 217–235 shows a compositional bias: basic and acidic residues; it reads TKNERRINQRKANDNKRRR.

This sequence belongs to the RRP17 family.

The protein localises to the nucleus. It is found in the nucleolus. Essential protein involved in ribosomal RNA processing. This chain is Ribosomal RNA-processing protein 17 (RRP17), found in Saccharomyces cerevisiae (strain ATCC 204508 / S288c) (Baker's yeast).